The primary structure comprises 625 residues: BTB/POZ domain-containing protein At5g48130 (625 aa).

One can recognise a BTB domain in the interval 41–105; sequence ASVHVRVCNK…IYGCPTLIHP (65 aa). Positions 217-469 constitute an NPH3 domain; sequence DTWIKDLTDL…VQALFIQQLN (253 aa). Residues 494–507 show a composition bias toward polar residues; sequence VPSSRPLTSQQSPC. The interval 494 to 513 is disordered; sequence VPSSRPLTSQQSPCTDDETG.

This sequence belongs to the NPH3 family.

The protein operates within protein modification; protein ubiquitination. Its function is as follows. May act as a substrate-specific adapter of an E3 ubiquitin-protein ligase complex (CUL3-RBX1-BTB) which mediates the ubiquitination and subsequent proteasomal degradation of target proteins. This is BTB/POZ domain-containing protein At5g48130 from Arabidopsis thaliana (Mouse-ear cress).